The sequence spans 1770 residues: Transposon Ty2-OR2 Gag-Pol polyprotein (1770 aa).

Disordered stretches follow at residues 1–88 and 359–449; these read MESQ…YQQH and QHSE…SNDE. Polar residues-rich tracts occupy residues 19–39 and 49–60; these read ASVTSKEVPSNQDPLAVSASN and KVNSQEETTPGT. The RNA-binding stretch occupies residues 295–397; sequence ENNINVSDRL…SSKPRAAKAH (103 aa). The span at 369 to 381 shows a compositional bias: low complexity; that stretch reads TSPNTTNTKVTTR. Composition is skewed to polar residues over residues 399–408 and 415–435; these read IATSSKFSRV and ESTVSSQYLSDDNELSLGQQQ. The active-site For protease activity; shared with dimeric partner is aspartate 457. The integrase-type zinc finger-like stretch occupies residues 579-636; it reads NVNKSKSVNKYPYPLIHRMLGHANFRSIQKSLKKNAVTYLKESDIEWSNASTYQCPDC. The Integrase catalytic domain maps to 656–831; the sequence is ESYEPFQYLH…AGLDITTILP (176 aa). 2 residues coordinate Mg(2+): aspartate 667 and aspartate 732. Disordered stretches follow at residues 1005–1038, 1057–1135, 1146–1165, and 1170–1205; these read GGTIESDTTSPRHSSTFTARNQKRPGSPNDMIDL, GGTE…KSSK, LPLPDLTHKSPTDTSDVSKD, and HSRQTNSSLGGMDDSNVLTTTKSKKRSLEDNETEIE. 2 stretches are compositionally biased toward polar residues: residues 1009-1024 and 1065-1082; these read ESDTTSPRHSSTFTAR and QRNSDTNIKYRTTNSTPS. Residues 1151 to 1165 show a composition bias toward basic and acidic residues; sequence LTHKSPTDTSDVSKD. The Bipartite nuclear localization signal motif lies at 1193–1227; the sequence is KKRSLEDNETEIEVSRDTWNNKNMRSLEPPRSKKR. One can recognise a Reverse transcriptase Ty1/copia-type domain in the interval 1353-1491; sequence NDYYITQLDI…DILGLEIKYQ (139 aa). Positions 1361, 1442, 1443, 1625, 1667, and 1700 each coordinate Mg(2+). Positions 1625–1767 constitute an RNase H Ty1/copia-type domain; that stretch reads DASYGNQPYY…IKTFKLLTNK (143 aa).

As to quaternary structure, the capsid protein forms a homotrimer, from which the VLPs are assembled. The protease is a homodimer, whose active site consists of two apposed aspartic acid residues. In terms of processing, initially, virus-like particles (VLPs) are composed of the structural unprocessed proteins Gag and Gag-Pol, and also contain the host initiator methionine tRNA (tRNA(i)-Met) which serves as a primer for minus-strand DNA synthesis, and a dimer of genomic Ty RNA. Processing of the polyproteins occurs within the particle and proceeds by an ordered pathway, called maturation. First, the protease (PR) is released by autocatalytic cleavage of the Gag-Pol polyprotein, and this cleavage is a prerequisite for subsequent processing at the remaining sites to release the mature structural and catalytic proteins. Maturation takes place prior to the RT reaction and is required to produce transposition-competent VLPs.

The protein resides in the cytoplasm. The protein localises to the nucleus. The enzyme catalyses DNA(n) + a 2'-deoxyribonucleoside 5'-triphosphate = DNA(n+1) + diphosphate. It catalyses the reaction Endonucleolytic cleavage to 5'-phosphomonoester.. Its function is as follows. Capsid protein (CA) is the structural component of the virus-like particle (VLP), forming the shell that encapsulates the retrotransposons dimeric RNA genome. The particles are assembled from trimer-clustered units and there are holes in the capsid shells that allow for the diffusion of macromolecules. CA also has nucleocapsid-like chaperone activity, promoting primer tRNA(i)-Met annealing to the multipartite primer-binding site (PBS), dimerization of Ty2 RNA and initiation of reverse transcription. Functionally, the aspartyl protease (PR) mediates the proteolytic cleavages of the Gag and Gag-Pol polyproteins after assembly of the VLP. In terms of biological role, reverse transcriptase/ribonuclease H (RT) is a multifunctional enzyme that catalyzes the conversion of the retro-elements RNA genome into dsDNA within the VLP. The enzyme displays a DNA polymerase activity that can copy either DNA or RNA templates, and a ribonuclease H (RNase H) activity that cleaves the RNA strand of RNA-DNA heteroduplexes during plus-strand synthesis and hydrolyzes RNA primers. The conversion leads to a linear dsDNA copy of the retrotransposon that includes long terminal repeats (LTRs) at both ends. Integrase (IN) targets the VLP to the nucleus, where a subparticle preintegration complex (PIC) containing at least integrase and the newly synthesized dsDNA copy of the retrotransposon must transit the nuclear membrane. Once in the nucleus, integrase performs the integration of the dsDNA into the host genome. In Saccharomyces cerevisiae (strain ATCC 204508 / S288c) (Baker's yeast), this protein is Transposon Ty2-OR2 Gag-Pol polyprotein (TY2B-OR2).